Reading from the N-terminus, the 511-residue chain is Probable lipid II flippase MurJ (511 aa).

13 helical membrane-spanning segments follow: residues 31-51 (IFGA…PNLL), 90-110 (LLTL…PWVI), 130-150 (LLKI…VGAI), 159-179 (IPAF…LFAA), 182-202 (FNPP…LQLV), 237-257 (ILGV…ASFL), 271-291 (LMEF…LPSL), 314-334 (CFLL…PLTV), 354-374 (LIAY…APGF), 383-403 (PVKI…AFIG), 407-427 (HAGL…LLYW), 443-463 (AFLL…LGML), and 481-501 (LMAV…VLGF).

This sequence belongs to the MurJ/MviN family.

Its subcellular location is the cell inner membrane. The protein operates within cell wall biogenesis; peptidoglycan biosynthesis. In terms of biological role, involved in peptidoglycan biosynthesis. Transports lipid-linked peptidoglycan precursors from the inner to the outer leaflet of the cytoplasmic membrane. The protein is Probable lipid II flippase MurJ of Escherichia coli O157:H7.